A 152-amino-acid chain; its full sequence is Transcriptional repressor NrdR (152 aa).

The segment at 3–34 is a zinc-finger region; it reads CAFCGNPDTQVIDSRVSEDGSSIRRRRRCPAC. An ATP-cone domain is found at 49-139; it reads PQVVKTAGHR…VYRSFQDISE (91 aa).

Belongs to the NrdR family. Zn(2+) is required as a cofactor.

In terms of biological role, negatively regulates transcription of bacterial ribonucleotide reductase nrd genes and operons by binding to NrdR-boxes. The protein is Transcriptional repressor NrdR of Chromobacterium violaceum (strain ATCC 12472 / DSM 30191 / JCM 1249 / CCUG 213 / NBRC 12614 / NCIMB 9131 / NCTC 9757 / MK).